The sequence spans 50 residues: Small integral membrane protein 46 (50 aa).

Residues 15-37 form a helical membrane-spanning segment; that stretch reads TTFQLWLQLLLWAHLAVRFLGYL.

It is found in the membrane. The chain is Small integral membrane protein 46 from Homo sapiens (Human).